The following is a 426-amino-acid chain: Transcription factor bHLH60 (426 aa).

2 stretches are compositionally biased toward polar residues: residues 117–137 (QNGNISGETPTSSVPSNSSAN) and 148–172 (TDSSQRLISDSAIENQIPCPNQNNR). Residues 117–201 (QNGNISGETP…SSEENEKLPY (85 aa)) form a disordered region. The span at 191–200 (KSSEENEKLP) shows a compositional bias: basic and acidic residues. Residues 210–307 (QATDSHSLAE…DEIINHVQSL (98 aa)) form the bHLH domain. A disordered region spans residues 367 to 398 (HRQLQQPPTQQWPFDGLNQPVWGREEDQAHGN).

As to quaternary structure, homodimer. Expressed constitutively in roots, leaves, stems, and flowers.

The protein resides in the nucleus. The chain is Transcription factor bHLH60 (BHLH60) from Arabidopsis thaliana (Mouse-ear cress).